The primary structure comprises 367 residues: 3-dehydroquinate synthase (367 aa).

NAD(+)-binding positions include 69–74 (DGEAFK), 103–107 (GVIGD), 127–128 (TT), Lys-140, and Lys-149. The Zn(2+) site is built by Glu-182, His-245, and His-262.

This sequence belongs to the sugar phosphate cyclases superfamily. Dehydroquinate synthase family. It depends on Co(2+) as a cofactor. Requires Zn(2+) as cofactor. NAD(+) serves as cofactor.

It is found in the cytoplasm. It catalyses the reaction 7-phospho-2-dehydro-3-deoxy-D-arabino-heptonate = 3-dehydroquinate + phosphate. It functions in the pathway metabolic intermediate biosynthesis; chorismate biosynthesis; chorismate from D-erythrose 4-phosphate and phosphoenolpyruvate: step 2/7. Its function is as follows. Catalyzes the conversion of 3-deoxy-D-arabino-heptulosonate 7-phosphate (DAHP) to dehydroquinate (DHQ). The chain is 3-dehydroquinate synthase from Pseudomonas savastanoi pv. phaseolicola (strain 1448A / Race 6) (Pseudomonas syringae pv. phaseolicola (strain 1448A / Race 6)).